We begin with the raw amino-acid sequence, 322 residues long: Lipoyl synthase (322 aa).

7 residues coordinate [4Fe-4S] cluster: cysteine 68, cysteine 73, cysteine 79, cysteine 94, cysteine 98, cysteine 101, and serine 309. Residues phenylalanine 80 to serine 298 enclose the Radical SAM core domain.

It belongs to the radical SAM superfamily. Lipoyl synthase family. It depends on [4Fe-4S] cluster as a cofactor.

It localises to the cytoplasm. The catalysed reaction is [[Fe-S] cluster scaffold protein carrying a second [4Fe-4S](2+) cluster] + N(6)-octanoyl-L-lysyl-[protein] + 2 oxidized [2Fe-2S]-[ferredoxin] + 2 S-adenosyl-L-methionine + 4 H(+) = [[Fe-S] cluster scaffold protein] + N(6)-[(R)-dihydrolipoyl]-L-lysyl-[protein] + 4 Fe(3+) + 2 hydrogen sulfide + 2 5'-deoxyadenosine + 2 L-methionine + 2 reduced [2Fe-2S]-[ferredoxin]. It participates in protein modification; protein lipoylation via endogenous pathway; protein N(6)-(lipoyl)lysine from octanoyl-[acyl-carrier-protein]: step 2/2. Functionally, catalyzes the radical-mediated insertion of two sulfur atoms into the C-6 and C-8 positions of the octanoyl moiety bound to the lipoyl domains of lipoate-dependent enzymes, thereby converting the octanoylated domains into lipoylated derivatives. This chain is Lipoyl synthase, found in Idiomarina loihiensis (strain ATCC BAA-735 / DSM 15497 / L2-TR).